The sequence spans 190 residues: Movement protein (190 aa).

The protein belongs to the tombusvirus/aureusvirus movement protein p22 family.

The protein resides in the host membrane. Transports viral genome to neighboring plant cells directly through plasmosdesmata, without any budding. The movement protein allows efficient cell to cell propagation, by bypassing the host cell wall barrier. The sequence is that of Movement protein from Cucumber necrosis virus (CNV).